Reading from the N-terminus, the 309-residue chain is Homoserine kinase (309 aa).

91–101 (PIGSGLGSSAC) is an ATP binding site.

This sequence belongs to the GHMP kinase family. Homoserine kinase subfamily.

The protein localises to the cytoplasm. The catalysed reaction is L-homoserine + ATP = O-phospho-L-homoserine + ADP + H(+). The protein operates within amino-acid biosynthesis; L-threonine biosynthesis; L-threonine from L-aspartate: step 4/5. Its function is as follows. Catalyzes the ATP-dependent phosphorylation of L-homoserine to L-homoserine phosphate. This Salmonella dublin (strain CT_02021853) protein is Homoserine kinase.